We begin with the raw amino-acid sequence, 329 residues long: Lipoyl synthase (329 aa).

The disordered stretch occupies residues 1–23 (MTDLTATPAPAEPAASAYDPTAK). Cys-76, Cys-81, Cys-87, Cys-102, Cys-106, Cys-109, and Ser-316 together coordinate [4Fe-4S] cluster. The Radical SAM core domain occupies 87-305 (CFGKGTATFM…EEEAYKMGFT (219 aa)).

Belongs to the radical SAM superfamily. Lipoyl synthase family. [4Fe-4S] cluster is required as a cofactor.

The protein resides in the cytoplasm. It catalyses the reaction [[Fe-S] cluster scaffold protein carrying a second [4Fe-4S](2+) cluster] + N(6)-octanoyl-L-lysyl-[protein] + 2 oxidized [2Fe-2S]-[ferredoxin] + 2 S-adenosyl-L-methionine + 4 H(+) = [[Fe-S] cluster scaffold protein] + N(6)-[(R)-dihydrolipoyl]-L-lysyl-[protein] + 4 Fe(3+) + 2 hydrogen sulfide + 2 5'-deoxyadenosine + 2 L-methionine + 2 reduced [2Fe-2S]-[ferredoxin]. Its pathway is protein modification; protein lipoylation via endogenous pathway; protein N(6)-(lipoyl)lysine from octanoyl-[acyl-carrier-protein]: step 2/2. Its function is as follows. Catalyzes the radical-mediated insertion of two sulfur atoms into the C-6 and C-8 positions of the octanoyl moiety bound to the lipoyl domains of lipoate-dependent enzymes, thereby converting the octanoylated domains into lipoylated derivatives. The protein is Lipoyl synthase of Burkholderia pseudomallei (strain 1106a).